The sequence spans 314 residues: Periplasmic [NiFe] hydrogenase small subunit (314 aa).

The segment at residues 1-49 (MNFSVGLGRDDAEKRLVQNGVSRRDFMKFCATVAAAMGMGPAFAPKVAE) is a signal peptide (tat-type signal). 8 residues coordinate [4Fe-4S] cluster: Cys-67, Cys-70, Cys-164, Cys-197, His-234, Cys-237, Cys-262, and Cys-268. Positions 277, 295, and 298 each coordinate [3Fe-4S] cluster.

Belongs to the [NiFe]/[NiFeSe] hydrogenase small subunit family. As to quaternary structure, heterodimer of a large and a small subunit. [4Fe-4S] cluster is required as a cofactor. The cofactor is [3Fe-4S] cluster. In terms of processing, predicted to be exported by the Tat system. The position of the signal peptide cleavage has been experimentally proven.

It is found in the periplasm. It carries out the reaction 2 Fe(III)-[cytochrome c3] + H2 = 2 Fe(II)-[cytochrome c3] + 2 H(+). In terms of biological role, involved in hydrogen uptake for the anaerobic reduction of sulfate to hydrogen sulfide in an electron transport chain. Cytochrome c3 is the physiological electron acceptor. The protein is Periplasmic [NiFe] hydrogenase small subunit (hydA) of Solidesulfovibrio fructosivorans (Desulfovibrio fructosivorans).